A 182-amino-acid chain; its full sequence is Putative manganese efflux pump MntP (182 aa).

Helical transmembrane passes span 6 to 26 (LIPL…VSLG), 37 to 57 (ILYI…IGMV), 71 to 91 (HFAG…STIL), 101 to 121 (IGIS…SVGL), 131 to 151 (IITI…GLLI), and 162 to 182 (YGEI…LFPI).

This sequence belongs to the MntP (TC 9.B.29) family.

The protein localises to the cell membrane. Functionally, probably functions as a manganese efflux pump. The polypeptide is Putative manganese efflux pump MntP (Bacillus cereus (strain G9842)).